The chain runs to 41 residues: Large ribosomal subunit protein bL36 (41 aa).

It belongs to the bacterial ribosomal protein bL36 family.

In Rhodopseudomonas palustris (strain BisB5), this protein is Large ribosomal subunit protein bL36.